A 242-amino-acid chain; its full sequence is 1-(5-phosphoribosyl)-5-[(5-phosphoribosylamino)methylideneamino] imidazole-4-carboxamide isomerase (242 aa).

The Proton acceptor role is filled by D8. D129 serves as the catalytic Proton donor.

It belongs to the HisA/HisF family.

The protein localises to the cytoplasm. It carries out the reaction 1-(5-phospho-beta-D-ribosyl)-5-[(5-phospho-beta-D-ribosylamino)methylideneamino]imidazole-4-carboxamide = 5-[(5-phospho-1-deoxy-D-ribulos-1-ylimino)methylamino]-1-(5-phospho-beta-D-ribosyl)imidazole-4-carboxamide. Its pathway is amino-acid biosynthesis; L-histidine biosynthesis; L-histidine from 5-phospho-alpha-D-ribose 1-diphosphate: step 4/9. The sequence is that of 1-(5-phosphoribosyl)-5-[(5-phosphoribosylamino)methylideneamino] imidazole-4-carboxamide isomerase from Clostridium botulinum (strain Langeland / NCTC 10281 / Type F).